Here is a 358-residue protein sequence, read N- to C-terminus: MRVLAAMSGGVDSSVAAARMVDAGHDVVGVHLALSTAPGTLRTGSRGCCSKEDASDARRVADVLGIPFYVWDFAEKFQADVIDEFVSAYARGETPNPCVTCNQKIKFSALSAKAVALGFDAVATGHYARLSGGRLRRAVDKDKDQSYVLAVLSAEQLRHAAFPIGDTPKPQIREEAARRGLAVAEKPDSHDICFIPSGNTRAFLGERIGVRRGAVVNADGTVLAEHDGVHGFTIGQRKGLGIAGPGPDGRPRYVTAIDADTATVRVGEAADLDVREMLGRAVVFTSGTAPSGPFECAVQVRAHGETADAVAELVGDELVVRLRAPLRGVAPGQTLALYRHDPDGDEVLGSATIAGTSR.

ATP contacts are provided by residues 6 to 13 (AMSGGVDS) and Leu32. Cys101 (nucleophile) is an active-site residue. Residues Cys101 and Cys193 are joined by a disulfide bond. Gly125 provides a ligand contact to ATP. The segment at 143–145 (KDQ) is interaction with tRNA. Cys193 serves as the catalytic Cysteine persulfide intermediate.

Belongs to the MnmA/TRMU family.

It is found in the cytoplasm. The enzyme catalyses S-sulfanyl-L-cysteinyl-[protein] + uridine(34) in tRNA + AH2 + ATP = 2-thiouridine(34) in tRNA + L-cysteinyl-[protein] + A + AMP + diphosphate + H(+). Functionally, catalyzes the 2-thiolation of uridine at the wobble position (U34) of tRNA, leading to the formation of s(2)U34. The chain is tRNA-specific 2-thiouridylase MnmA from Mycobacterium avium (strain 104).